An 829-amino-acid polypeptide reads, in one-letter code: Protein kintoun (829 aa).

Disordered stretches follow at residues 197 to 255 (VLRT…APTE), 349 to 377 (LPVA…DGAA), 400 to 465 (PSRT…SWGD), and 478 to 505 (RPTL…GGPG). The segment covering 352 to 371 (APTASRPEPAASPEEAADPP) has biased composition (low complexity). Residues 416-430 (PGKERVAKSEERDFG) are compositionally biased toward basic and acidic residues. Residue Ser450 is modified to Phosphoserine. Positions 484-497 (EARETREGTGREPA) are enriched in basic and acidic residues. Ser632 carries the phosphoserine modification. A disordered region spans residues 667 to 698 (NSEQLHEKEERVHEGSPLTEKENTEHATISTT). A compositionally biased stretch (basic and acidic residues) spans 670-691 (QLHEKEERVHEGSPLTEKENTE).

Belongs to the PIH1 family. Kintoun subfamily. As to quaternary structure, interacts with CFAP300. Interacts with DNAI2 and HSPA1A. Interacts with DNAAF4. Interacts with DNAAF6/PIH1D3.

The protein localises to the cytoplasm. Its subcellular location is the dynein axonemal particle. In terms of biological role, required for cytoplasmic pre-assembly of axonemal dyneins, thereby playing a central role in motility in cilia and flagella. Involved in pre-assembly of dynein arm complexes in the cytoplasm before intraflagellar transport loads them for the ciliary compartment. The polypeptide is Protein kintoun (Bos taurus (Bovine)).